The chain runs to 174 residues: 2-C-methyl-D-erythritol 2,4-cyclodiphosphate synthase (174 aa).

A divalent metal cation is bound by residues aspartate 13, histidine 15, and histidine 61. 4-CDP-2-C-methyl-D-erythritol 2-phosphate is bound at residue aspartate 13–histidine 15. 4-CDP-2-C-methyl-D-erythritol 2-phosphate contacts are provided by residues aspartate 75–glycine 77, threonine 149–aspartate 152, phenylalanine 156, and arginine 159.

It belongs to the IspF family. As to quaternary structure, homotrimer. The cofactor is a divalent metal cation.

It catalyses the reaction 4-CDP-2-C-methyl-D-erythritol 2-phosphate = 2-C-methyl-D-erythritol 2,4-cyclic diphosphate + CMP. The protein operates within isoprenoid biosynthesis; isopentenyl diphosphate biosynthesis via DXP pathway; isopentenyl diphosphate from 1-deoxy-D-xylulose 5-phosphate: step 4/6. Functionally, involved in the biosynthesis of isopentenyl diphosphate (IPP) and dimethylallyl diphosphate (DMAPP), two major building blocks of isoprenoid compounds. Catalyzes the conversion of 4-diphosphocytidyl-2-C-methyl-D-erythritol 2-phosphate (CDP-ME2P) to 2-C-methyl-D-erythritol 2,4-cyclodiphosphate (ME-CPP) with a corresponding release of cytidine 5-monophosphate (CMP). In Bifidobacterium longum subsp. infantis (strain ATCC 15697 / DSM 20088 / JCM 1222 / NCTC 11817 / S12), this protein is 2-C-methyl-D-erythritol 2,4-cyclodiphosphate synthase.